Consider the following 289-residue polypeptide: Glycerol facilitator-aquaporin gla (289 aa).

The next 2 membrane-spanning stretches (helical) occupy residues 10–30 (ITEF…VANV) and 41–61 (SWMI…VAFG). The NPA 1 motif lies at 68–70 (NPA). 3 consecutive transmembrane segments (helical) span residues 87 to 107 (AQYI…IVMV), 151 to 171 (FVGS…FFGS), and 209 to 229 (MVAH…LGGP). Positions 235 to 237 (NPA) match the NPA 2 motif. A helical transmembrane segment spans residues 264 to 284 (WYAWVPVLAPILASLAAVALF).

It belongs to the MIP/aquaporin (TC 1.A.8) family.

The protein localises to the cell membrane. Mixed channel protein that transports both water and glycerol. The polypeptide is Glycerol facilitator-aquaporin gla (gla) (Lactococcus lactis subsp. lactis (strain IL1403) (Streptococcus lactis)).